We begin with the raw amino-acid sequence, 325 residues long: Serine/threonine-protein kinase CtkA (325 aa).

ATP is bound by residues 21–24, lysine 37, glutamine 72, and 88–90; these read NGNK and KDF. 2 residues coordinate Mg(2+): asparagine 160 and aspartate 179. Aspartate 179 serves as a coordination point for ATP. The segment at 296–325 is disordered; sequence QHKQAHSNPYDNADDLDNSNEYTPTPKRRR.

Autophosphorylates on either Thr-3 or Thr-7.

It localises to the secreted. Its subcellular location is the host cytoplasm. The protein localises to the host cytosol. It is found in the host nucleus. The catalysed reaction is L-seryl-[protein] + ATP = O-phospho-L-seryl-[protein] + ADP + H(+). It catalyses the reaction L-threonyl-[protein] + ATP = O-phospho-L-threonyl-[protein] + ADP + H(+). Functionally, virulence factor acting as a pro-inflammatory protein that induces the secretion of the pro-inflammatory cytokines TNF-alpha (tumor necrosis factor-alpha) and IL-8 (interleukin-8) from human macrophages, as well as enhanced translocation of the transcription factor NF-kappa-B complex in macrophages. Is a kinase capable of autophosphorylating itself at a threonine residue near the N-terminus. Also leads to enhanced phosphorylation of the NF-kappa-B p65 subunit (RELA) at 'Ser-276' in human epithelial cancer cells; its kinase activity is required for this enhanced phosphorylation that up-regulates NF-kappa-B activity, but it does not directly phosphorylate this protein. Thus, the kinase activity of CtkA may play an important role in the induction of host inflammatory responses during H.pylori infection. The polypeptide is Serine/threonine-protein kinase CtkA (ctkA) (Helicobacter pylori (strain J99 / ATCC 700824) (Campylobacter pylori J99)).